The sequence spans 455 residues: MLTCNDCSTWEQFVNYIKTRCSKTAFENWIAPIQVLEESREKIRLEIPNIFVQSYLLDNYKKDLCSFVPLDAEGNPALEFVVSEIKRSSPQIAASVTKPAVEVSEENKDFQLKLNGAYRFDNFIEGPSNQFVKSAALGIAARPGRSYNPLFIHGGVGLGKTHLLHAVGHYVREHHKNLRIHCITTEAFINDLVHHLRVKSIDKMKNFYRSLDLLLVDDIQFLQNRQNFEEEFCNTFETLIHLSKQIVVTSDKPPGQLKLSERIIARMEWGLVAHVGVPDLETRVAILQHKAEQKGLNIPNEIAFYIADHVYGNVRQLEGAINKLTAYCLLFNKPLTETTVRDTLKELFRTPSKQKVSVESILKSVATVFQVKIQDLKGTSRAKNVPLARQVAMYLAKTLITDSLVAIGAAFGKTHSTVLYACKTIEQKIEKDALLKNQISLCKNNIAIDSPQHFV.

The segment at 1–95 (MLTCNDCSTW…KRSSPQIAAS (95 aa)) is domain I, interacts with DnaA modulators. The interval 96-112 (VTKPAVEVSEENKDFQL) is domain II. Positions 113-328 (KLNGAYRFDN…GAINKLTAYC (216 aa)) are domain III, AAA+ region. ATP contacts are provided by glycine 157, glycine 159, lysine 160, and threonine 161. Residues 329–455 (LLFNKPLTET…IAIDSPQHFV (127 aa)) form a domain IV, binds dsDNA region.

Belongs to the DnaA family. As to quaternary structure, oligomerizes as a right-handed, spiral filament on DNA at oriC.

The protein resides in the cytoplasm. In terms of biological role, plays an essential role in the initiation and regulation of chromosomal replication. ATP-DnaA binds to the origin of replication (oriC) to initiate formation of the DNA replication initiation complex once per cell cycle. Binds the DnaA box (a 9 base pair repeat at the origin) and separates the double-stranded (ds)DNA. Forms a right-handed helical filament on oriC DNA; dsDNA binds to the exterior of the filament while single-stranded (ss)DNA is stabiized in the filament's interior. The ATP-DnaA-oriC complex binds and stabilizes one strand of the AT-rich DNA unwinding element (DUE), permitting loading of DNA polymerase. After initiation quickly degrades to an ADP-DnaA complex that is not apt for DNA replication. Binds acidic phospholipids. This is Chromosomal replication initiator protein DnaA 2 from Chlamydia muridarum (strain MoPn / Nigg).